The sequence spans 454 residues: Carbamoyl phosphate synthase arginine-specific small chain (454 aa).

A mitochondrion-targeting transit peptide spans 1–29 (MMFSRFFKAVPARAPAFSSPLPVYQARTM). Residues 219–406 (HVAVLDCGVK…IDSVKKYKNS (188 aa)) form the Glutamine amidotransferase type-1 domain. The active-site Nucleophile is the cysteine 295. Active-site residues include histidine 379 and glutamate 381.

It belongs to the CarA family. Heterodimer composed of 2 chains; the small (or glutamine) chain promotes the hydrolysis of glutamine to ammonia, which is used by the large (or ammonia) chain to synthesize carbamoyl phosphate.

Its subcellular location is the mitochondrion matrix. It carries out the reaction hydrogencarbonate + L-glutamine + 2 ATP + H2O = carbamoyl phosphate + L-glutamate + 2 ADP + phosphate + 2 H(+). The enzyme catalyses L-glutamine + H2O = L-glutamate + NH4(+). It functions in the pathway amino-acid biosynthesis; L-arginine biosynthesis; carbamoyl phosphate from bicarbonate: step 1/1. Functionally, small subunit of the arginine-specific carbamoyl phosphate synthase (CPSase). CPSase catalyzes the formation of carbamoyl phosphate from the ammonia moiety of glutamine, carbonate, and phosphate donated by ATP, the first step of the arginine biosynthetic pathway. The small subunit (glutamine amidotransferase) binds and cleaves glutamine to supply the large subunit with the substrate ammonia. In Emericella nidulans (strain FGSC A4 / ATCC 38163 / CBS 112.46 / NRRL 194 / M139) (Aspergillus nidulans), this protein is Carbamoyl phosphate synthase arginine-specific small chain (cpa-1).